Here is a 186-residue protein sequence, read N- to C-terminus: Tumor necrosis factor alpha-induced protein 8-like protein 1 (186 aa).

The protein belongs to the TNFAIP8 family. Interacts with FBXW5; TNFAIP8L1 competes with TSC2 to bind FBXW5 increasing TSC2 stability by preventing its ubiquitination. In terms of tissue distribution, detected in wide variety tissues, such as neurons in brain, hepatocytes, germ cells of female and male reproductive organs, muscular tissues and variety types of cells of the epithelial origin (at protein level).

Its subcellular location is the cytoplasm. Functionally, acts as a negative regulator of mTOR activity. In Mus musculus (Mouse), this protein is Tumor necrosis factor alpha-induced protein 8-like protein 1 (Tnfaip8l1).